The sequence spans 310 residues: MKALWAVLLATLLTGCLSEGEPEVTEQLSWQSDQPWEQALNRFWDYLRWVQTLSDQVQEELQNSQVTQELTVLMEDTMTEVKAYKKELEEQLGPVAEETRARLAKEVQAAQARLGADMEDLRNRLAQYRNEVHTMLGQSTEELRSRLSSHLRKMRKRLMRDAEDLQKRLAVYKAGAREGAERGVSAIRERLGPLVEQGRQRTANLGAGVAQPLRDRAQALGDRLRGRLEEVGNQARDRLEEMREHMEEVRSKMEEQTQQIRLQAEIFQARLKGWFEPLVEDMQRQLANLVEKIQASTNSVLSTSVPQENQ.

A signal peptide spans 1-18 (MKALWAVLLATLLTGCLS). 8 repeat units span residues 72 to 93 (VLME…EQLG), 94 to 115 (PVAE…ARLG), 116 to 137 (ADME…TMLG), 138 to 159 (QSTE…KRLM), 160 to 181 (RDAE…EGAE), 182 to 203 (RGVS…QRTA), 204 to 225 (NLGA…DRLR), and 226 to 247 (GRLE…EHME). The tract at residues 72-247 (VLMEDTMTEV…RLEEMREHME (176 aa)) is 8 X 22 AA approximate tandem repeats. M135 is subject to Methionine sulfoxide. The LDL and other lipoprotein receptors binding stretch occupies residues 150–160 (HLRKMRKRLMR). Residues 150–160 (HLRKMRKRLMR) are LDL receptor binding. 154-157 (MRKR) is a binding site for heparin. The segment at 202-282 (TANLGAGVAQ…GWFEPLVEDM (81 aa)) is lipid-binding and lipoprotein association. 221-228 (GDRLRGRL) lines the heparin pocket. The interval 258–310 (QQIRLQAEIFQARLKGWFEPLVEDMQRQLANLVEKIQASTNSVLSTSVPQENQ) is homooligomerization. The segment at 270-282 (RLKGWFEPLVEDM) is specificity for association with VLDL.

It belongs to the apolipoprotein A1/A4/E family. Homotetramer. May interact with ABCA1; functionally associated with ABCA1 in the biogenesis of HDLs. May interact with APP/A4 amyloid-beta peptide; the interaction is extremely stable in vitro but its physiological significance is unclear. May interact with MAPT. May interact with MAP2. In the cerebrospinal fluid, interacts with secreted SORL1. Interacts with PMEL; this allows the loading of PMEL luminal fragment on ILVs to induce fibril nucleation. Post-translationally, APOE exists as multiple glycosylated and sialylated glycoforms within cells and in plasma. The extent of glycosylation and sialylation are tissue and context specific. Glycated in plasma VLDL. In terms of processing, phosphorylated by FAM20C in the extracellular medium.

The protein localises to the secreted. It localises to the extracellular space. It is found in the extracellular matrix. Its subcellular location is the extracellular vesicle. The protein resides in the endosome. The protein localises to the multivesicular body. In terms of biological role, APOE is an apolipoprotein, a protein associating with lipid particles, that mainly functions in lipoprotein-mediated lipid transport between organs via the plasma and interstitial fluids. APOE is a core component of plasma lipoproteins and is involved in their production, conversion and clearance. Apolipoproteins are amphipathic molecules that interact both with lipids of the lipoprotein particle core and the aqueous environment of the plasma. As such, APOE associates with chylomicrons, chylomicron remnants, very low density lipoproteins (VLDL) and intermediate density lipoproteins (IDL) but shows a preferential binding to high-density lipoproteins (HDL). It also binds a wide range of cellular receptors including the LDL receptor/LDLR, the LDL receptor-related proteins LRP1, LRP2 and LRP8 and the very low-density lipoprotein receptor/VLDLR that mediate the cellular uptake of the APOE-containing lipoprotein particles. Finally, APOE also has a heparin-binding activity and binds heparan-sulfate proteoglycans on the surface of cells, a property that supports the capture and the receptor-mediated uptake of APOE-containing lipoproteins by cells. A main function of APOE is to mediate lipoprotein clearance through the uptake of chylomicrons, VLDLs, and HDLs by hepatocytes. APOE is also involved in the biosynthesis by the liver of VLDLs as well as their uptake by peripheral tissues ensuring the delivery of triglycerides and energy storage in muscle, heart and adipose tissues. By participating in the lipoprotein-mediated distribution of lipids among tissues, APOE plays a critical role in plasma and tissues lipid homeostasis. APOE is also involved in two steps of reverse cholesterol transport, the HDLs-mediated transport of cholesterol from peripheral tissues to the liver, and thereby plays an important role in cholesterol homeostasis. First, it is functionally associated with ABCA1 in the biogenesis of HDLs in tissues. Second, it is enriched in circulating HDLs and mediates their uptake by hepatocytes. APOE also plays an important role in lipid transport in the central nervous system, regulating neuron survival and sprouting. The sequence is that of Apolipoprotein E (Apoe) from Grammomys surdaster (African woodland thicket rat).